A 101-amino-acid chain; its full sequence is NADH-quinone oxidoreductase subunit K (101 aa).

3 helical membrane passes run 4–24 (LSHF…GIFL), 30–50 (IVLL…FIAF), and 61–81 (VFVF…LAIL).

Belongs to the complex I subunit 4L family. NDH-1 is composed of 14 different subunits. Subunits NuoA, H, J, K, L, M, N constitute the membrane sector of the complex.

The protein resides in the cell inner membrane. The catalysed reaction is a quinone + NADH + 5 H(+)(in) = a quinol + NAD(+) + 4 H(+)(out). Its function is as follows. NDH-1 shuttles electrons from NADH, via FMN and iron-sulfur (Fe-S) centers, to quinones in the respiratory chain. The immediate electron acceptor for the enzyme in this species is believed to be ubiquinone. Couples the redox reaction to proton translocation (for every two electrons transferred, four hydrogen ions are translocated across the cytoplasmic membrane), and thus conserves the redox energy in a proton gradient. The sequence is that of NADH-quinone oxidoreductase subunit K from Thiobacillus denitrificans (strain ATCC 25259 / T1).